An 89-amino-acid polypeptide reads, in one-letter code: Elongation factor 1-beta (89 aa).

The protein belongs to the EF-1-beta/EF-1-delta family.

Promotes the exchange of GDP for GTP in EF-1-alpha/GDP, thus allowing the regeneration of EF-1-alpha/GTP that could then be used to form the ternary complex EF-1-alpha/GTP/AAtRNA. This Methanothermobacter thermautotrophicus (strain ATCC 29096 / DSM 1053 / JCM 10044 / NBRC 100330 / Delta H) (Methanobacterium thermoautotrophicum) protein is Elongation factor 1-beta (ef1b).